Here is a 619-residue protein sequence, read N- to C-terminus: Dihydroxy-acid dehydratase (619 aa).

Position 81 (aspartate 81) interacts with Mg(2+). Cysteine 122 serves as a coordination point for [2Fe-2S] cluster. Mg(2+)-binding residues include aspartate 123 and lysine 124. At lysine 124 the chain carries N6-carboxylysine. Cysteine 198 contacts [2Fe-2S] cluster. Glutamate 494 contributes to the Mg(2+) binding site. The active-site Proton acceptor is the serine 520.

Belongs to the IlvD/Edd family. In terms of assembly, homodimer. [2Fe-2S] cluster serves as cofactor. The cofactor is Mg(2+).

The enzyme catalyses (2R)-2,3-dihydroxy-3-methylbutanoate = 3-methyl-2-oxobutanoate + H2O. The catalysed reaction is (2R,3R)-2,3-dihydroxy-3-methylpentanoate = (S)-3-methyl-2-oxopentanoate + H2O. It participates in amino-acid biosynthesis; L-isoleucine biosynthesis; L-isoleucine from 2-oxobutanoate: step 3/4. It functions in the pathway amino-acid biosynthesis; L-valine biosynthesis; L-valine from pyruvate: step 3/4. In terms of biological role, functions in the biosynthesis of branched-chain amino acids. Catalyzes the dehydration of (2R,3R)-2,3-dihydroxy-3-methylpentanoate (2,3-dihydroxy-3-methylvalerate) into 2-oxo-3-methylpentanoate (2-oxo-3-methylvalerate) and of (2R)-2,3-dihydroxy-3-methylbutanoate (2,3-dihydroxyisovalerate) into 2-oxo-3-methylbutanoate (2-oxoisovalerate), the penultimate precursor to L-isoleucine and L-valine, respectively. This Neisseria meningitidis serogroup A / serotype 4A (strain DSM 15465 / Z2491) protein is Dihydroxy-acid dehydratase.